A 2188-amino-acid chain; its full sequence is Tiggrin (2188 aa).

The signal sequence occupies residues 1–18; it reads MRALGGITLLLAVAICQG. Coiled coils occupy residues 570–635, 1009–1050, 1312–1343, and 1613–1641; these read SRLE…EHIK, LKNL…EIES, TFVE…EIEE, and KQQR…AQYH. Residues 1984–2188 are disordered; the sequence is IFSKDRGDQP…FWEKLKEKLG (205 aa). A compositionally biased stretch (basic and acidic residues) spans 1985-1998; that stretch reads FSKDRGDQPPHTYD. Residues 1989-1991 carry the Cell attachment site motif; that stretch reads RGD. A compositionally biased stretch (acidic residues) spans 2000 to 2009; the sequence is SFVEGDEPGL. The span at 2016–2033 shows a compositional bias: pro residues; sequence PRPPNPAPIVSTPKPPLP. Low complexity-rich tracts occupy residues 2057–2077 and 2091–2101; these read GSAS…ASAS and QQEVDLGQQQQ. Over residues 2115-2139 the composition is skewed to polar residues; that stretch reads GQQTQVEDTDWNQQAEDLGQQQQVQ. The segment covering 2148–2165 has biased composition (low complexity); it reads QTQGHSSSSNSRSQPLQQ. A compositionally biased stretch (basic and acidic residues) spans 2179–2188; it reads FWEKLKEKLG.

Post-translationally, O-glycosylation by pgant3 is required for proper secretion and localization to the basal cell layer interface during wing development. In terms of tissue distribution, in embryos, expressed in the apodemes (muscle attachment sites) of the major longitudinal muscles 4, 6, 7, 12 and 13 and the wide dorsal oblique muscles 9 and 10, in hemocytes, in fat body cells, in basement membranes surrounding the gut and in the commissures of the ventral nerve cord. Expressed in larval imaginal wing disk and in pupal wing. In adult flies, expressed in the jump muscle (at protein level).

The protein resides in the secreted. Its subcellular location is the extracellular space. It localises to the extracellular matrix. Functions as a ligand for integrin alpha-PS2/beta-PS. Required in larvae for proper muscle structure and function. Involved in the regulation of cell adhesion during wing development. The sequence is that of Tiggrin from Drosophila melanogaster (Fruit fly).